Consider the following 233-residue polypeptide: Octanoyltransferase (233 aa).

One can recognise a BPL/LPL catalytic domain in the interval 34–214; sequence GQAPSTVLLL…EFSAREATLI (181 aa). Residues 72 to 79, 144 to 146, and 157 to 159 contribute to the substrate site; these read RGGKLTWH, AIG, and GFS. Cysteine 175 functions as the Acyl-thioester intermediate in the catalytic mechanism.

It belongs to the LipB family.

The protein resides in the cytoplasm. It catalyses the reaction octanoyl-[ACP] + L-lysyl-[protein] = N(6)-octanoyl-L-lysyl-[protein] + holo-[ACP] + H(+). Its pathway is protein modification; protein lipoylation via endogenous pathway; protein N(6)-(lipoyl)lysine from octanoyl-[acyl-carrier-protein]: step 1/2. Catalyzes the transfer of endogenously produced octanoic acid from octanoyl-acyl-carrier-protein onto the lipoyl domains of lipoate-dependent enzymes. Lipoyl-ACP can also act as a substrate although octanoyl-ACP is likely to be the physiological substrate. The polypeptide is Octanoyltransferase (Renibacterium salmoninarum (strain ATCC 33209 / DSM 20767 / JCM 11484 / NBRC 15589 / NCIMB 2235)).